Consider the following 256-residue polypeptide: Ribonuclease HII (256 aa).

An RNase H type-2 domain is found at 72–256 (ALICGIDEVG…SFEPIKSMMK (185 aa)). Residues Asp78, Glu79, and Asp170 each coordinate a divalent metal cation.

It belongs to the RNase HII family. Mn(2+) is required as a cofactor. It depends on Mg(2+) as a cofactor.

It is found in the cytoplasm. It carries out the reaction Endonucleolytic cleavage to 5'-phosphomonoester.. Endonuclease that specifically degrades the RNA of RNA-DNA hybrids. This chain is Ribonuclease HII, found in Staphylococcus epidermidis (strain ATCC 12228 / FDA PCI 1200).